The following is a 221-amino-acid chain: Flavin-dependent thymidylate synthase (221 aa).

The region spanning 9–209 (GFVKLLDHMG…PWTYESFIRY (201 aa)) is the ThyX domain. Residues S55, 78–80 (RHR), and E86 each bind FAD. DUMP is bound by residues 75–78 (QWMR), 86–90 (ELSGR), and R148. Residues 78 to 88 (RHRIASYNELS) carry the ThyX motif motif. FAD is bound by residues 164 to 166 (NAR) and N170. R175 is a dUMP binding site. Catalysis depends on R175, which acts as the Involved in ionization of N3 of dUMP, leading to its activation.

It belongs to the thymidylate synthase ThyX family. As to quaternary structure, homotetramer. The cofactor is FAD.

The catalysed reaction is dUMP + (6R)-5,10-methylene-5,6,7,8-tetrahydrofolate + NADPH + H(+) = dTMP + (6S)-5,6,7,8-tetrahydrofolate + NADP(+). Its pathway is pyrimidine metabolism; dTTP biosynthesis. Its function is as follows. Catalyzes the reductive methylation of 2'-deoxyuridine-5'-monophosphate (dUMP) to 2'-deoxythymidine-5'-monophosphate (dTMP) while utilizing 5,10-methylenetetrahydrofolate (mTHF) as the methyl donor, and NADPH and FADH(2) as the reductant. This is Flavin-dependent thymidylate synthase from Pseudothermotoga lettingae (strain ATCC BAA-301 / DSM 14385 / NBRC 107922 / TMO) (Thermotoga lettingae).